Consider the following 188-residue polypeptide: Nicotinamide-nucleotide adenylyltransferase (188 aa).

Belongs to the archaeal NMN adenylyltransferase family.

It is found in the cytoplasm. It catalyses the reaction beta-nicotinamide D-ribonucleotide + ATP + H(+) = diphosphate + NAD(+). The protein operates within cofactor biosynthesis; NAD(+) biosynthesis; NAD(+) from nicotinamide D-ribonucleotide: step 1/1. This chain is Nicotinamide-nucleotide adenylyltransferase, found in Thermococcus kodakarensis (strain ATCC BAA-918 / JCM 12380 / KOD1) (Pyrococcus kodakaraensis (strain KOD1)).